A 150-amino-acid chain; its full sequence is D-aminoacyl-tRNA deacylase (150 aa).

The short motif at glycine 138 to proline 139 is the Gly-cisPro motif, important for rejection of L-amino acids element.

This sequence belongs to the DTD family. As to quaternary structure, homodimer.

The protein resides in the cytoplasm. It carries out the reaction glycyl-tRNA(Ala) + H2O = tRNA(Ala) + glycine + H(+). The catalysed reaction is a D-aminoacyl-tRNA + H2O = a tRNA + a D-alpha-amino acid + H(+). Its function is as follows. An aminoacyl-tRNA editing enzyme that deacylates mischarged D-aminoacyl-tRNAs. Also deacylates mischarged glycyl-tRNA(Ala), protecting cells against glycine mischarging by AlaRS. Acts via tRNA-based rather than protein-based catalysis; rejects L-amino acids rather than detecting D-amino acids in the active site. By recycling D-aminoacyl-tRNA to D-amino acids and free tRNA molecules, this enzyme counteracts the toxicity associated with the formation of D-aminoacyl-tRNA entities in vivo and helps enforce protein L-homochirality. The polypeptide is D-aminoacyl-tRNA deacylase (Cytophaga hutchinsonii (strain ATCC 33406 / DSM 1761 / CIP 103989 / NBRC 15051 / NCIMB 9469 / D465)).